Reading from the N-terminus, the 284-residue chain is Tropomyosin (284 aa).

Met1 is modified (N-acetylmethionine). Residues 1–42 (MDAIKKKMQAMKLEKDNAMDRADTLEQQNKEANNRAEKSEEE) are disordered. A coiled-coil region spans residues 1 to 284 (MDAIKKKMQA…DQTFSELSGY (284 aa)). A compositionally biased stretch (basic and acidic residues) spans 12-38 (KLEKDNAMDRADTLEQQNKEANNRAEK).

This sequence belongs to the tropomyosin family. In terms of assembly, homodimer.

In terms of biological role, tropomyosin, in association with the troponin complex, plays a central role in the calcium dependent regulation of muscle contraction. This is Tropomyosin from Pandalus borealis (Northern red shrimp).